The sequence spans 468 residues: Asparagine--tRNA ligase (468 aa).

It belongs to the class-II aminoacyl-tRNA synthetase family. As to quaternary structure, homodimer.

Its subcellular location is the cytoplasm. It catalyses the reaction tRNA(Asn) + L-asparagine + ATP = L-asparaginyl-tRNA(Asn) + AMP + diphosphate + H(+). The chain is Asparagine--tRNA ligase from Parabacteroides distasonis (strain ATCC 8503 / DSM 20701 / CIP 104284 / JCM 5825 / NCTC 11152).